The sequence spans 96 residues: Putative pterin-4-alpha-carbinolamine dehydratase (96 aa).

The protein belongs to the pterin-4-alpha-carbinolamine dehydratase family.

The enzyme catalyses (4aS,6R)-4a-hydroxy-L-erythro-5,6,7,8-tetrahydrobiopterin = (6R)-L-erythro-6,7-dihydrobiopterin + H2O. The protein is Putative pterin-4-alpha-carbinolamine dehydratase of Novosphingobium aromaticivorans (strain ATCC 700278 / DSM 12444 / CCUG 56034 / CIP 105152 / NBRC 16084 / F199).